The primary structure comprises 619 residues: Manganese lipoxygenase (619 aa).

The first 16 residues, 1–16, serve as a signal peptide directing secretion; sequence MRVLVWIAGLAPLAVA. 6 N-linked (GlcNAc...) asparagine glycosylation sites follow: Asn32, Asn42, Asn62, Asn86, Asn164, and Asn229. The Lipoxygenase domain occupies 55-619; the sequence is TLPCEDGNST…PGNIPFYLSV (565 aa). Mn(2+) is bound by residues His298, His303, His483, and Asn487. N-linked (GlcNAc...) asparagine glycans are attached at residues Asn515 and Asn549. Mn(2+) is bound at residue Val619.

Belongs to the lipoxygenase family. Manganese lipoxygenase subfamily. It depends on Mn(2+) as a cofactor.

It localises to the secreted. It carries out the reaction (9Z,12Z)-octadecadienoate + O2 = (9S)-hydroperoxy-(10E,12Z)-octadecadienoate. The catalysed reaction is (9Z,12Z)-octadecadienoate + O2 = (11S)-hydroperoxy-(9Z,12Z)-octadecadienoate. The enzyme catalyses (9Z,12Z)-octadecadienoate + O2 = (13R)-hydroperoxy-(9Z,11E)-octadecadienoate. It catalyses the reaction (9Z,12Z,15Z)-octadecatrienoate + O2 = (9S)-hydroperoxy-(10E,12Z,15Z)-octadecatrienoate. It carries out the reaction (9Z,12Z,15Z)-octadecatrienoate + O2 = (11R)-hydroperoxy-(9Z,12Z,15Z)-octadecatrienoate. The catalysed reaction is (9Z,12Z,15Z)-octadecatrienoate + O2 = (13R)-hydroperoxy-(9Z,11E,15Z)-octadecatrienoate. The enzyme catalyses (9S)-hydroperoxy-(10E,12Z,15Z)-octadecatrienoate + O2 = (9S,16S)-dihydroperoxy-(10E,12Z,14E)-octadecatrienoate. In terms of biological role, lipoxygenase that metabolizes linoleic and alpha-linolenic acids to 9S-, 11- and 13R-hydroperoxy fatty acids. At the end of lipoxygenation, the intermediate product 11S-HPODE from linoleic acid is then transformed into 9S-HPODE and 13R-HPODE as the final products. The intermediate product 11R-HPOTrE from alpha-linolenic acid is transformed into 9S-HPOTrE and 13R-HPOTrE as the final products. 9S-HPOTrE is further oxidized by the enzyme to 9S,16S-DiHPOTrE as the end product. This Pyricularia oryzae (strain 70-15 / ATCC MYA-4617 / FGSC 8958) (Rice blast fungus) protein is Manganese lipoxygenase.